We begin with the raw amino-acid sequence, 867 residues long: Inactive tyrosine-protein kinase kin-32 (867 aa).

The FERM domain maps to 3 to 327 (GLARVFLIGG…GYQMLYNQRD (325 aa)). Residues 367–631 (ITLKELIGGG…IIEDVRQQII (265 aa)) form the Protein kinase domain. ATP is bound by residues 373 to 381 (IGGGQFGNV) and K400. A coiled-coil region spans residues 662-691 (TLYRTMEDQKRQAEEDAKWLEQEDDEDEDD). The interval 674 to 729 (AEEDAKWLEQEDDEDEDDQDIDQIPSTSHSSVENIRTSNGYLHHTPTSTRSLRFED) is disordered. Acidic residues predominate over residues 683 to 694 (QEDDEDEDDQDI). The span at 698-724 (PSTSHSSVENIRTSNGYLHHTPTSTRS) shows a compositional bias: polar residues.

The protein belongs to the protein kinase superfamily. Tyr protein kinase family. FAK subfamily. Expressed in body wall muscles and some neurons in the head.

Functionally, has apparently no tyrosine kinase activity in vitro when expressed in mammalian cells. This chain is Inactive tyrosine-protein kinase kin-32, found in Caenorhabditis elegans.